A 224-amino-acid polypeptide reads, in one-letter code: Thiamine-triphosphatase (224 aa).

Residue A2 is modified to N-acetylalanine. One can recognise a CYTH domain in the interval 5 to 201 (LIEVERKFTP…AKLLVYLQRF (197 aa)). Positions 7 and 9 each coordinate Mg(2+). Positions 11, 55, 57, 65, and 125 each coordinate substrate. D145, E157, and E159 together coordinate Mg(2+). E157 is a binding site for substrate. Substrate is bound at residue K193.

Belongs to the ThTPase family. In terms of assembly, monomer. Mg(2+) serves as cofactor.

The protein localises to the cytoplasm. The catalysed reaction is thiamine triphosphate + H2O = thiamine diphosphate + phosphate + H(+). Hydrolase highly specific for thiamine triphosphate (ThTP). The protein is Thiamine-triphosphatase (Thtpa) of Rattus norvegicus (Rat).